Consider the following 897-residue polypeptide: Probable bifunctional chitinase/lysozyme (897 aa).

The N-terminal stretch at 1–24 is a signal peptide; sequence MKLNIFTKSMIGMGLVCSALPALA. The Chitin-binding type-3 1 domain maps to 25 to 91; it reads MEAWNNQQGG…SQFGNTLSCE (67 aa). Disordered stretches follow at residues 90-127, 182-222, and 287-333; these read CEKSGSSSSSNSNTPASNTPANGGSATPAQGTVPSNSS, TEIS…PADK, and QYGN…DSVN. Positions 95 to 111 are enriched in low complexity; the sequence is SSSSSNSNTPASNTPAN. 2 stretches are compositionally biased toward polar residues: residues 113–127 and 182–197; these read GSATPAQGTVPSNSS and TEISETSNPQSCTSAP. In terms of domain architecture, Chitin-binding type-3 2 spans 128–194; that stretch reads VVAWNKQQGG…SETSNPQSCT (67 aa). The span at 198 to 216 shows a compositional bias: pro residues; it reads QPSPDVKPAPDVKPAPDVQ. The 67-residue stretch at 229–295 folds into the Chitin-binding type-3 3 domain; it reads VVAWKGQEGS…SQYGNPGSCS (67 aa). The segment covering 309–318 has biased composition (pro residues); the sequence is DPTPETPVTP. Residues 322-333 are compositionally biased toward polar residues; it reads NSEPSTPADSVN. Chitin-binding type-3 domains follow at residues 337-403 and 459-529; these read LQAW…TTCE and AKAW…PQFN. Positions 586–877 constitute a GH18 domain; that stretch reads KHVYAPYVDF…TNLSPEFHGL (292 aa). C628 and C673 are oxidised to a cystine. The active-site Proton donor is E700.

The protein belongs to the glycosyl hydrolase 18 family. Chitinase class II subfamily.

The protein localises to the periplasm. The enzyme catalyses Random endo-hydrolysis of N-acetyl-beta-D-glucosaminide (1-&gt;4)-beta-linkages in chitin and chitodextrins.. It catalyses the reaction Hydrolysis of (1-&gt;4)-beta-linkages between N-acetylmuramic acid and N-acetyl-D-glucosamine residues in a peptidoglycan and between N-acetyl-D-glucosamine residues in chitodextrins.. Bifunctional enzyme with lysozyme/chitinase activity. The sequence is that of Probable bifunctional chitinase/lysozyme (chiA) from Escherichia coli (strain K12).